The following is a 418-amino-acid chain: Equilibrative nucleotide transporter 4 (418 aa).

11 helical membrane-spanning segments follow: residues 20–40 (MVVC…MLTI), 54–74 (SRVF…ILAY), 85–105 (ILTG…LDLT), 108–128 (GHGG…FGLA), 147–169 (LIQS…RLIT), 186–206 (IFLA…AYVF), 264–284 (HAVN…GFLY), 291–311 (GLGD…DLFG), 326–346 (KALT…YFTA), 353–373 (WMIM…VCIM), and 392–412 (LVVF…LWLI).

This sequence belongs to the SLC29A/ENT transporter (TC 2.A.57) family. Expressed in leaves and at lowe levels in stems and flowers.

The protein localises to the cell membrane. Its function is as follows. Nucleoside transporter that can mediate uptake of adenosine, uridine, guanosine or cytidine when expressed in a heterologous system (yeast). This chain is Equilibrative nucleotide transporter 4 (ENT4), found in Arabidopsis thaliana (Mouse-ear cress).